The chain runs to 197 residues: Endoribonuclease YbeY (197 aa).

Residues H156, H160, and H166 each contribute to the Zn(2+) site.

Belongs to the endoribonuclease YbeY family. It depends on Zn(2+) as a cofactor.

It localises to the cytoplasm. Its function is as follows. Single strand-specific metallo-endoribonuclease involved in late-stage 70S ribosome quality control and in maturation of the 3' terminus of the 16S rRNA. The chain is Endoribonuclease YbeY from Cupriavidus metallidurans (strain ATCC 43123 / DSM 2839 / NBRC 102507 / CH34) (Ralstonia metallidurans).